Here is a 449-residue protein sequence, read N- to C-terminus: UNC93-like protein MFSD11 (449 aa).

The chain crosses the membrane as a helical span at residues 8–28; it reads LFNIIILGVAFMFMFTAFQTC. Asparagine 40 carries an N-linked (GlcNAc...) asparagine glycan. Helical transmembrane passes span 53-73, 74-94, 96-116, 138-158, and 170-190; these read AIIY…VAIV, GPQL…AVFI, PFPW…AVLW, IFWA…YFAW, and RTVF…FFLI. Phosphoserine is present on serine 204. The next 6 helical transmembrane spans lie at 239–259, 277–297, 309–329, 359–379, 385–405, and 410–430; these read MLLL…FSGV, LIGL…SLFG, PVVL…FLNM, FLLG…LGFL, APAF…AFFY, and LLHW…ISFF.

Belongs to the unc-93 family.

The protein resides in the membrane. The protein is UNC93-like protein MFSD11 (MFSD11) of Homo sapiens (Human).